A 332-amino-acid chain; its full sequence is tRNA uridine(34) hydroxylase (332 aa).

The 95-residue stretch at 123–217 folds into the Rhodanese domain; that stretch reads SDPEVLLVDT…YLEEVKQEES (95 aa). The active-site Cysteine persulfide intermediate is the C177. The tract at residues 302–332 is disordered; sequence SDVGAVIQSRRDNKENLKKSQVKLNNKKYNK. Residues 310-319 show a composition bias toward basic and acidic residues; sequence SRRDNKENLK.

It belongs to the TrhO family.

It catalyses the reaction uridine(34) in tRNA + AH2 + O2 = 5-hydroxyuridine(34) in tRNA + A + H2O. Functionally, catalyzes oxygen-dependent 5-hydroxyuridine (ho5U) modification at position 34 in tRNAs. This chain is tRNA uridine(34) hydroxylase, found in Shewanella woodyi (strain ATCC 51908 / MS32).